A 409-amino-acid chain; its full sequence is Broad specificity amino-acid racemase (409 aa).

A signal peptide spans 1 to 23; that stretch reads MPFSRTLLALSLGMALLQNPAFA. Cysteine 70 and cysteine 96 are disulfide-bonded. Residue lysine 74 is the Proton acceptor of the active site. The residue at position 74 (lysine 74) is an N6-(pyridoxal phosphate)lysine. A substrate-binding site is contributed by arginine 173. The active-site Proton acceptor is tyrosine 300. Methionine 348 contributes to the substrate binding site.

This sequence belongs to the alanine racemase family. Bsr subfamily. Homodimer. The cofactor is pyridoxal 5'-phosphate.

The protein localises to the periplasm. It carries out the reaction an L-alpha-amino acid = a D-alpha-amino acid. The enzyme catalyses L-lysine = D-lysine. The catalysed reaction is L-arginine = D-arginine. It catalyses the reaction L-ornithine = D-ornithine. It carries out the reaction L-alanine = D-alanine. The enzyme catalyses L-methionine = D-methionine. Its function is as follows. Amino-acid racemase able to utilize a broad range of substrates. Is mostly active with lysine and arginine and, to a lesser extent, with ornithine, whereas is about 10 times less active with alanine, methionine and ethionine. With phenylalanine as substrate only a trace activity is detectable, and is inactive with glutamate. Plays a key role in the catabolism of D-arginine and D-lysine, that allows P.taetrolens strain NBRC 3460 to grow on these basic D-amino acids as a sole carbon source. The sequence is that of Broad specificity amino-acid racemase from Pseudomonas taetrolens.